A 421-amino-acid chain; its full sequence is Tyrosine--tRNA ligase (421 aa).

Residue Tyr-35 participates in L-tyrosine binding. The 'HIGH' region signature appears at 40–49 (PTGPSLHAGH). L-tyrosine-binding residues include Tyr-169 and Gln-173. Positions 229–233 (KFGKS) match the 'KMSKS' region motif. Lys-232 is an ATP binding site. One can recognise an S4 RNA-binding domain in the interval 354-420 (RTIVDLLIAS…GKKNFAGVKI (67 aa)).

It belongs to the class-I aminoacyl-tRNA synthetase family. TyrS type 1 subfamily. Homodimer.

It is found in the cytoplasm. The enzyme catalyses tRNA(Tyr) + L-tyrosine + ATP = L-tyrosyl-tRNA(Tyr) + AMP + diphosphate + H(+). Its function is as follows. Catalyzes the attachment of tyrosine to tRNA(Tyr) in a two-step reaction: tyrosine is first activated by ATP to form Tyr-AMP and then transferred to the acceptor end of tRNA(Tyr). The sequence is that of Tyrosine--tRNA ligase from Corynebacterium efficiens (strain DSM 44549 / YS-314 / AJ 12310 / JCM 11189 / NBRC 100395).